The primary structure comprises 89 residues: Large ribosomal subunit protein bL31B (89 aa).

Belongs to the bacterial ribosomal protein bL31 family. Type B subfamily. As to quaternary structure, part of the 50S ribosomal subunit.

The sequence is that of Large ribosomal subunit protein bL31B from Corynebacterium urealyticum (strain ATCC 43042 / DSM 7109).